Reading from the N-terminus, the 35-residue chain is Photosystem II reaction center protein T (35 aa).

Residues alanine 3–phenylalanine 23 traverse the membrane as a helical segment.

Belongs to the PsbT family. In terms of assembly, PSII is composed of 1 copy each of membrane proteins PsbA, PsbB, PsbC, PsbD, PsbE, PsbF, PsbH, PsbI, PsbJ, PsbK, PsbL, PsbM, PsbT, PsbY, PsbZ, Psb30/Ycf12, at least 3 peripheral proteins of the oxygen-evolving complex and a large number of cofactors. It forms dimeric complexes.

It is found in the plastid. It localises to the chloroplast thylakoid membrane. In terms of biological role, found at the monomer-monomer interface of the photosystem II (PS II) dimer, plays a role in assembly and dimerization of PSII. PSII is a light-driven water plastoquinone oxidoreductase, using light energy to abstract electrons from H(2)O, generating a proton gradient subsequently used for ATP formation. This is Photosystem II reaction center protein T from Taxus brevifolia (Pacific yew).